The sequence spans 326 residues: Serine hydrolase-like protein (326 aa).

One can recognise an AB hydrolase-1 domain in the interval 44-155 (PVLCLHGWAD…FLPTEVTDMF (112 aa)). S118 is an active-site residue.

This sequence belongs to the AB hydrolase superfamily.

Functionally, probable serine hydrolase. The protein is Serine hydrolase-like protein (serhl) of Danio rerio (Zebrafish).